We begin with the raw amino-acid sequence, 571 residues long: MNDEEKHLAAPANAYQPNMHYQQQQEKQTGYNAEYDTHQGGYNQNQNQDYYNHSQGGYQMDNMGQHGGYQGNPNDNYNNQQPPPYTPDFPPDYNYKPNPNAATFDEAFAVPKPKWNDKIGLVILALIFSGYLALSIIVIRAYAQTHSFQGWGIYSGENDYSLNTHTLILYAFVLATAMVLSLLYFIAARVWTKQFIWITYILHLLFSWGTAIYYLVVGYYSAGIVFIVFAALTTWWFWCSRKRIPFATIVLQTLIDVTRANPSVLVISAVGTVVGACFGTWFSFTIVSIYVKYDPDNRNPGCMTTGGSCSNGKLIGLILFAIFCGYYLTEVIKNVIHVTISGVYGSWYYCSKSDQGMPKHAAMSSFRRAVTYSLGSISLGSLIVSIINFIRQILSVLQQDARQSGDTLATVLLCFVQCCFGVLDWLVTYFNHYAYSYIALYGKAYVPSAKATWKLMQTRGIDAMVNDSLIGSVLSFGASFVAYAAALVAYCFLKYTDPSYNSGGGFYAPVVGLAFVIALQVSNITNVSLKSGCSTFFLALARDPEVLRVSYPQIYEEICRTYPPARDKLDI.

Residues M1 to K96 form a disordered region. At M1–K118 the chain is on the cytoplasmic side. The span at Y15 to Y31 shows a compositional bias: polar residues. 2 stretches are compositionally biased toward low complexity: residues Q39–N52 and G71–Q80. Residues Q81–P90 show a composition bias toward pro residues. A helical membrane pass occupies residues I119–I139. Residues R140–T166 are Extracellular-facing. Residues L167–A187 traverse the membrane as a helical segment. Residues A188–R189 are Cytoplasmic-facing. A helical transmembrane segment spans residues V190 to T210. A211 is a topological domain (extracellular). A helical membrane pass occupies residues I212–L232. Topologically, residues T233–S263 are cytoplasmic. A helical membrane pass occupies residues V264–F284. Residues T285–N311 are Extracellular-facing. A helical transmembrane segment spans residues G312–I332. At K333 to A369 the chain is on the cytoplasmic side. Residues V370 to I390 form a helical membrane-spanning segment. The Extracellular segment spans residues R391 to D406. A helical membrane pass occupies residues T407–V427. Residues T428 to S472 lie on the Cytoplasmic side of the membrane. Residues V473–L493 traverse the membrane as a helical segment. At K494 to G503 the chain is on the extracellular side. A helical transmembrane segment spans residues G504–I524. At T525–I571 the chain is on the cytoplasmic side.

It belongs to the CTL (choline transporter-like) family.

It is found in the cell membrane. Probably involved in transport through the plasma membrane. The protein is Protein PNS1 (PNS1) of Yarrowia lipolytica (strain CLIB 122 / E 150) (Yeast).